Reading from the N-terminus, the 167-residue chain is UPF0225 protein VP1145 (167 aa).

It belongs to the UPF0225 family.

This Vibrio parahaemolyticus serotype O3:K6 (strain RIMD 2210633) protein is UPF0225 protein VP1145.